The sequence spans 109 residues: Putative transposase MJ0856.1 (109 aa).

The Zn(2+) site is built by Cys-36, Cys-39, Cys-62, and Cys-65.

It belongs to the transposase 35 family.

The sequence is that of Putative transposase MJ0856.1 from Methanocaldococcus jannaschii (strain ATCC 43067 / DSM 2661 / JAL-1 / JCM 10045 / NBRC 100440) (Methanococcus jannaschii).